Reading from the N-terminus, the 236-residue chain is 4-aminobenzoate synthase (236 aa).

Residues Glu-87, His-94, Glu-148, His-180, Asp-184, and His-187 each coordinate Fe(2+).

This sequence belongs to the CADD family. As to quaternary structure, homodimer. Fe(2+) serves as cofactor. Mn(2+) is required as a cofactor.

Involved in de novo para-aminobenzoate (PABA) biosynthesis. Acts as a self-sacrificing or 'suicide' enzyme that utilizes its own active site tyrosine residue(s) as the substrate for PABA synthesis. The side chain of the tyrosine residue is released from the protein backbone via cleavage of the C(alpha)-C(beta) bond, leaving a glycine in place of the original tyrosine residue. Reaction requires O(2) and a reduced dimetal cofactor. This Chlamydia muridarum (strain MoPn / Nigg) protein is 4-aminobenzoate synthase.